A 283-amino-acid polypeptide reads, in one-letter code: Polyamine aminopropyltransferase (283 aa).

Residues 5–241 (NNWYIEHFER…GWWSVTMARK (237 aa)) enclose the PABS domain. Gln35 contacts S-methyl-5'-thioadenosine. His66 and Asp90 together coordinate spermidine. Residues Asp110 and 141-142 (DG) contribute to the S-methyl-5'-thioadenosine site. Asp160 serves as the catalytic Proton acceptor. Residue 160–163 (DSTD) coordinates spermidine. Residue Pro167 participates in S-methyl-5'-thioadenosine binding.

This sequence belongs to the spermidine/spermine synthase family. In terms of assembly, homodimer or homotetramer.

It localises to the cytoplasm. It catalyses the reaction S-adenosyl 3-(methylsulfanyl)propylamine + putrescine = S-methyl-5'-thioadenosine + spermidine + H(+). The protein operates within amine and polyamine biosynthesis; spermidine biosynthesis; spermidine from putrescine: step 1/1. Its function is as follows. Catalyzes the irreversible transfer of a propylamine group from the amino donor S-adenosylmethioninamine (decarboxy-AdoMet) to putrescine (1,4-diaminobutane) to yield spermidine. The polypeptide is Polyamine aminopropyltransferase (Stenotrophomonas maltophilia (strain K279a)).